Reading from the N-terminus, the 1383-residue chain is MSLKVIPCTLTKNQEVFKCVSAQLQYRRGEEEHGSGPIIHRWRPNGHTVAVACANNTVIYYDKKGNVIDALNPTGKLIDIAWDKEGDVLAIAVANTGTIYLWDVNSRNTDTVESGATSSKELPTCLAWSPSTPTLVIGNNAGNIVVYNHRTSRRIAVMGKHQRSVTQITVTPEDYVISCSDDNTLSVTTLEGTTVSTTTTNGEPTNMDYGSVNGKGGSGVTMVSVVIGKKILMLAHYNALDEPVNLQFQEKYGNIHSYRWFNDGYILIGFDRGYIISISAHNNEIGSELVSFLEYRGYLASIAVSTSFNKLLTIGDNMVKVRDLDELTTVTMLTEIETEKNLSEIEVTEDGQLVAVSSQSGVLSIFVTKMPTLAASYNNSICYLTNLTQVTVVAEVEKKGSSTLELNIEPTVMGLGPLNLAVANNNTVFFYDYHTPAQMQAAQQLQSTQSAAEKPTIVAAEPINRVEYLSTVTNIQLNYMYAAVNFGSRLRLHRIRNSEDNVSIEFPEANRNATLYSYALTENFLIFTTSNNYIVYFSLSEWAIVSEYRHVVPVRSIFPHPTNVVCCCFDDRLEAMIYSAVDDEVFRLPSVGSSAHYKGAIWETFTIDKNTFAVFDSQNIYVFLLSKQHIQGESVIYVSATRLPHAYVPLSLNKGIVTCLMSNGKLSSVLLDSHKTESVISDKSETVIDDILTRSLLMHRWSTAWKICIHSNDGSHWNQFAMAALLDSDVGMAIKIFREIGDAAMVTALELIETIEEKNLLHAQIYTILSRYDDAEQLYLESSRPMEALNMRRDLLEWPKALVLAETMNPKEIPYLSKEYAQELELTGDHANSLANYEKGVMENPQNLPELQEHNEICQSGIARMAIKTGDLRRGVQLAKQLEGRVVKRDCAIILEQMKQYTEAAQLYEVGLFYDRAAAVCLKANAWAKVGELLDHVKSPKIHIQYGKIMEKEKKYKVAVKCYETGRDYDNQVRLLLDPLNDPDEAVRVVRESRSIEGAKLVAKFFVKLGDYNSAIQFLVMSQCVQEAFELAEKNNAVREYAKAIEQHGNISQALELAEYYNRVNDMFMAAKFYTQAGQYNNAINLLFKNGDDENCVALAVDCGIKSKDKTLNNKLVKFLLGEDGNVKDPAQLFRLYVGLGRTKDAAQTAVVVAQIHQAKGNYRIARDLLFQMHQQLREKMMRIPLDMNKSLMAIHSYIIVKALINRKETLLAARLLIRTCGEIQRFPTHVVPILTSSVVICTQANLKKSAHKFAAQLMTPEYRPKIHEKYKKKIEDIVRKGGNQKDLVEENTPCPICDDLMPAYAMSCDNCKSLVPYCILTGRHIVASDFSRCPHCEMPGFYSEFRKLSILNENCYMCGGDLKGAIPEDAKAYLEKMEQDYK.

WD repeat units lie at residues 32–71, 72–112, 118–157, 160–198, and 337–376; these read EHGS…IDAL, NPTG…TDTV, SSKE…RIAV, KHQR…VSTT, and ETEK…LAAS. TPR repeat units lie at residues 756 to 789, 810 to 847, 885 to 918, 940 to 973, 996 to 1029, 1031 to 1053, and 1064 to 1097; these read EEKN…MEAL, PKEI…NPQN, RVVK…DRAA, PKIH…DNQV, IEGA…QEAF, LAEK…NISQ, and VNDM…ENCV.

In terms of assembly, component of the IFT complex A (IFT-A) composed of at least che-11, daf-10, dyf-2, ift-139, ift-43 and ifta-1. As to expression, expressed in ciliated sensory neurons.

Its subcellular location is the cell projection. The protein localises to the cilium. Its function is as follows. Component of the IFT complex A (IFT-A), a complex required for retrograde ciliary transport. Moves along the ciliary axoneme and is involved in the assembly, localization and the movement of other intraflagellar transport (IFT) proteins along the cilia axoneme. May also associate with the BBSome complex in order to mediate ciliary transport. Regulates cilia biogenesis, morphology and sensitivity to environmental cues. The polypeptide is WD repeat-containing protein dyf-2 (Caenorhabditis elegans).